The sequence spans 441 residues: Transforming protein p54/c-ets-1 (441 aa).

A PNT domain is found at 51–136; the sequence is ATFSGFAKEQ…EHLEILQKEE (86 aa). The activation domain; required for transcription activation stretch occupies residues 130 to 243; sequence EILQKEEAKP…DNMCMGRASR (114 aa). The tract at residues 304 to 312 is helix HI-1; sequence FKDYVRDRA. The interval 323 to 330 is helix HI-2; sequence AAALAGYT. The segment at residues 335 to 415 is a DNA-binding region (ETS); that stretch reads IQLWQFLLEL…AGKRYVYRFV (81 aa). A helix H4 region spans residues 418–422; sequence LQSLL. The interval 426–432 is helix H5; sequence PEELHAM.

This sequence belongs to the ETS family. Binds DNA as a homodimer; homodimerization is required for transcription activation.

The protein resides in the nucleus. It is found in the cytoplasm. Autoinhibited by a module composed of four alpha helices (HI-1, HI-2, H4, and H5) that flank the DNA-binding ETS domain, reducing the affinity for DNA. Functionally, transcription factor. Directly controls the expression of cytokine and chemokine genes in a wide variety of different cellular contexts. In Gallus gallus (Chicken), this protein is Transforming protein p54/c-ets-1 (ETS1).